The sequence spans 315 residues: Tetratricopeptide repeat protein 23-like (315 aa).

The segment at 28–56 (KIPEHQRTDESSPTSGSEESEEDTKAKEK) is disordered. Coiled coils occupy residues 65-90 (REKL…ANKE), 179-200 (REAY…ESYK), and 250-280 (SELV…HQAH).

Its subcellular location is the cytoplasm. It is found in the cytoskeleton. The protein localises to the microtubule organizing center. It localises to the centrosome. The protein resides in the spindle. Its subcellular location is the midbody. This chain is Tetratricopeptide repeat protein 23-like (TTC23L), found in Bos taurus (Bovine).